The following is a 34-amino-acid chain: Photosystem II reaction center protein M (34 aa).

The chain crosses the membrane as a helical span at residues 5 to 25 (ILAFIATALFVLIPTAFLIIL).

The protein belongs to the PsbM family. PSII is composed of 1 copy each of membrane proteins PsbA, PsbB, PsbC, PsbD, PsbE, PsbF, PsbH, PsbI, PsbJ, PsbK, PsbL, PsbM, PsbT, PsbX, PsbY, PsbZ, Psb30/Ycf12, at least 3 peripheral proteins of the oxygen-evolving complex and a large number of cofactors. It forms dimeric complexes.

The protein localises to the plastid. The protein resides in the chloroplast thylakoid membrane. In terms of biological role, one of the components of the core complex of photosystem II (PSII). PSII is a light-driven water:plastoquinone oxidoreductase that uses light energy to abstract electrons from H(2)O, generating O(2) and a proton gradient subsequently used for ATP formation. It consists of a core antenna complex that captures photons, and an electron transfer chain that converts photonic excitation into a charge separation. This subunit is found at the monomer-monomer interface. The polypeptide is Photosystem II reaction center protein M (Zygnema circumcarinatum (Green alga)).